The sequence spans 349 residues: Interleukin-10 receptor subunit beta (349 aa).

The N-terminal stretch at 1–19 is a signal peptide; it reads MAPCVAGWLGGFLLVPALG. At 20–220 the chain is on the extracellular side; the sequence is MIPPPEKVRM…RTGNDEITPS (201 aa). Fibronectin type-III domains lie at 23–111 and 112–215; these read PPEK…VEDT and IIGP…TGND. The N-linked (GlcNAc...) asparagine glycan is linked to Asn49. A disulfide bond links Cys66 and Cys74. N-linked (GlcNAc...) asparagine glycosylation is found at Asn102, Asn161, and Asn199. A disulfide bond links Cys188 and Cys209. Residues 221–241 traverse the membrane as a helical segment; the sequence is WIVAIILIVSVLVVFLFLLGC. At 242 to 349 the chain is on the cytoplasmic side; the sequence is FVVLWLIYKK…PKLLTSTSEV (108 aa). At Ser299 the chain carries Phosphoserine. The tract at residues 300–349 is disordered; sequence EESEGSKQSPEDNCASEPPSDPGPRELESKDEAPSPPHDDPKLLTSTSEV. Residues 322–341 are compositionally biased toward basic and acidic residues; the sequence is GPRELESKDEAPSPPHDDPK.

Belongs to the type II cytokine receptor family. In terms of assembly, heterodimer with IFNLR1.

Its subcellular location is the membrane. Its function is as follows. Shared cell surface receptor required for the activation of five class 2 cytokines: IL10, IL22, IL26, IL28, and IFNL1. The IFNLR1/IL10RB dimer is a receptor for the cytokine ligands IFNL2 and IFNL3 and mediates their antiviral activity. The ligand/receptor complex stimulate the activation of the JAK/STAT signaling pathway leading to the expression of IFN-stimulated genes (ISG), which contribute to the antiviral state. The chain is Interleukin-10 receptor subunit beta (Il10rb) from Mus musculus (Mouse).